Here is a 248-residue protein sequence, read N- to C-terminus: Secreted and transmembrane protein 1 (248 aa).

An N-terminal signal peptide occupies residues Met-1–Ala-28. Residues Gln-29–Gly-145 lie on the Extracellular side of the membrane. A disulfide bridge links Cys-38 with Cys-55. N-linked (GlcNAc...) asparagine glycosylation occurs at Asn-56. The helical transmembrane segment at Phe-146–Phe-166 threads the bilayer. Residues Ala-167–Pro-248 lie on the Cytoplasmic side of the membrane.

The protein belongs to the SECTM family. Interacts with CD7. In terms of tissue distribution, detected at the highest levels in peripheral blood leukocytes and breast cancer cell lines. Found in leukocytes of the myeloid lineage, with the strongest expression observed in granulocytes and no detectable expression in lymphocytes. Expressed in thymic epithelial cells and fibroblasts.

The protein resides in the cell membrane. Its subcellular location is the secreted. May be involved in thymocyte signaling. The chain is Secreted and transmembrane protein 1 (SECTM1) from Homo sapiens (Human).